Consider the following 415-residue polypeptide: Protein CDC73 homolog (415 aa).

Belongs to the CDC73 family. As to quaternary structure, component of the nuclear PAF1 complex (PAF1C), which consists of VIP2/ELF7/PAF1, VIP3/SKI8/WDR61, VIP4/LEO1, VIP5/RTF1, VIP6/ELF8/CTR9 and CDC73. In terms of tissue distribution, expressed in root tips, shoot apex, young leaves and flowers, especially in stamen filaments and carpels.

It localises to the nucleus. Component of the PAF1 complex (PAF1C) which is involved in histone modifications such as methylation on histone H3 'Lys-4' (H3K4me3). Involved in regulation of flowering time. Required for the expression of the flowering repressors FLC and MADS-box genes of the MAF family. Required for histone H3 trimethylation on 'Lys-4' (H3K4me3) at the FLC locus. Prevents trimethylation on 'Lys-27' (H3K27me3) at the same locus. This is Protein CDC73 homolog from Arabidopsis thaliana (Mouse-ear cress).